Consider the following 1372-residue polypeptide: MLSFVDTRTLLLLAVTSCLATCQYLQSGSVRKGPTGDRGPRGQRGPAGPRGRDGVDGPMGPPGPPGSPGPPGSPAPPGLTGNFAAQYSDKGVSSGPGPMGLMGPRGPPGAVGAPGPQGFQGPAGEPGEPGQTGPAGPRGPAGSPGKAGEDGHPGKPGRPGERGVVGPQGARGFPGTPGLPGFKGVKGHSGMDGLKGQPGAQGVKGEPGAPGENGTPGQAGARGLPGERGRVGAPGPAGARGSDGSVGPVGPAGPIGSAGPPGFPGAPGPKGELGPVGNPGPAGPAGPRGEVGLPGLSGPVGPPGNPGTNGLTGAKGATGLPGVAGAPGLPGPRGIPGPAGAAGATGARGLVGEPGPAGSKGESGNKGEPGSVGAQGPPGPSGEEGKRGSPGEAGSAGPAGPPGLRGSPGSRGLPGADGRAGVMGPPGNRGSTGPAGIRGPNGDAGRPGEPGLMGPRGLPGSPGNVGPSGKEGPVGLPGIDGRPGPIGPAGPRGEAGNIGFPGPKGPSGDPGKPGERGHPGLAGARGAPGPDGNNGAQGPPGPQGVQGGKGEQGPAGPPGFQGLPGPSGTTGEVGKPGERGLPGEFGLPGPAGPRGERGTPGESGAAGPSGPIGSRGPSGAPGPDGNKGEAGAVGAPGSAGASGPGGLPGERGAAGIPGGKGEKGETGLRGDTGNTGRDGARGIPGAVGAPGPAGASGDRGEAGAAGPSGPAGPRGSPGERGEVGPAGPNGFAGPAGAAGQPGAKGEKGTKGPKGENGIVGPTGSVGAAGPSGPNGPPGPVGSRGDGGPPGMTGFPGAAGRTGPPGPSGIAGPPGPPGAAGKEGIRGPRGDQGPVGRTGETGASGPPGFVGEKGPSGEPGTAGAPGTAGPQGLLGAPGILGLPGSRGERGLPGIAGALGEPGPLGISGPPGARGPPGAVGSPGVNGAPGEAGRDGNPGSDGPPGRDGQPGHKGERGYPGSIGPTGAAGAPGPHGSVGPAGKHGNRGEPGPAGSVGPVGAVGPRGPSGPQGIRGDKGEPGDKGHRGLPGLKGYSGLQGLPGLAGLHGDQGAPGPVGPAGPRGPAGPSGPVGKDGRSGQPGPVGPAGVRGSQGSQGPAGPPGPPGPPGPPGVSGGGYDFGFEGDFYRADQPRSQPSLRPKDYEVDATLKSLNNQIETLLTPEGSRKNPARTCRDLRLSHPEWNSDYYWIDPNQGCTMDAIKVYCDFSTGETCIQAQPVNTPAKNSYSRAQANKHVWLGETINGGSQFEYNVEGVSSKEMATQLAFMRLLANRASQNITYHCKNSIAYLDEETGSLNKAVLLQGSNDVELVAEGNSRFTYSVLVDGCSKKTNEWGKTIIEYKTNKPSRLPFLDIAPLDIGGADQEFRVEVGPVCFK.

The signal sequence occupies residues 1 to 22 (MLSFVDTRTLLLLAVTSCLATC). Position 23 is a pyrrolidone carboxylic acid (Q23). Positions 23 to 85 (QYLQSGSVRK…PPGLTGNFAA (63 aa)) are cleaved as a propeptide — N-terminal propeptide. Positions 28–1135 (GSVRKGPTGD…DQPRSQPSLR (1108 aa)) are disordered. The span at 59–77 (MGPPGPPGSPGPPGSPAPP) shows a compositional bias: pro residues. K90 bears the Allysine mark. Over residues 95-146 (GPGPMGLMGPRGPPGAVGAPGPQGFQGPAGEPGEPGQTGPAGPRGPAGSPGK) the composition is skewed to low complexity. Basic and acidic residues predominate over residues 147 to 161 (AGEDGHPGKPGRPGE). K183 carries the post-translational modification 5-hydroxylysine; alternate. K183 carries O-linked (Gal...) hydroxylysine; alternate glycosylation. Low complexity-rich tracts occupy residues 231-260 (VGAPGPAGARGSDGSVGPVGPAGPIGSAGP), 285-299 (AGPRGEVGLPGLSGP), 306-327 (PGTNGLTGAKGATGLPGVAGAP), 336-351 (PGPAGAAGATGARGLV), 390-416 (PGEAGSAGPAGPPGLRGSPGSRGLPGA), 476-495 (LPGIDGRPGPIGPAGPRGEA), and 519-537 (PGLAGARGAPGPDGNNGAQ). Positions 544–553 (GVQGGKGEQG) are enriched in gly residues. A compositionally biased stretch (low complexity) spans 600–639 (PGESGAAGPSGPIGSRGPSGAPGPDGNKGEAGAVGAPGSA). Over residues 640–649 (GASGPGGLPG) the composition is skewed to gly residues. Composition is skewed to low complexity over residues 681-716 (RGIPGAVGAPGPAGASGDRGEAGAAGPSGPAGPRGS) and 725-743 (PAGPNGFAGPAGAAGQPGA). A compositionally biased stretch (basic and acidic residues) spans 744–753 (KGEKGTKGPK). Low complexity predominate over residues 755-771 (ENGIVGPTGSVGAAGPS). The span at 781–790 (GSRGDGGPPG) shows a compositional bias: gly residues. Low complexity-rich tracts occupy residues 792 to 801 (TGFPGAAGRT), 855 to 882 (SGEPGTAGAPGTAGPQGLLGAPGILGLP), 905 to 927 (ISGPPGARGPPGAVGSPGVNGAP), 957 to 978 (PGSIGPTGAAGAPGPHGSVGPA), and 987 to 1007 (PGPAGSVGPVGAVGPRGPSGP). Positions 1011–1022 (RGDKGEPGDKGH) are enriched in basic and acidic residues. A compositionally biased stretch (pro residues) spans 1095-1107 (AGPPGPPGPPGPP). The propeptide at 1126 to 1372 (DQPRSQPSLR…RVEVGPVCFK (247 aa)) is C-terminal propeptide. The 234-residue stretch at 1139–1372 (YEVDATLKSL…RVEVGPVCFK (234 aa)) folds into the Fibrillar collagen NC1 domain. Intrachain disulfides connect C1169–C1201, C1209–C1370, and C1278–C1323. Residues D1187, N1189, Q1190, C1192, and D1195 each coordinate Ca(2+). N1273 carries N-linked (GlcNAc...) asparagine glycosylation.

The protein belongs to the fibrillar collagen family. Trimers of one alpha 2(I) and two alpha 1(I) chains. Interacts (via C-terminus) with TMEM131 (via PapD-L domain); the interaction is direct and is involved in assembly and TRAPPIII ER-to-Golgi transport complex-dependent secretion of collagen. Prolines at the third position of the tripeptide repeating unit (G-X-Y) are hydroxylated in some or all of the chains. Expressed in kidney glomeruli.

It localises to the secreted. Its subcellular location is the extracellular space. The protein localises to the extracellular matrix. Type I collagen is a member of group I collagen (fibrillar forming collagen). This Mus musculus (Mouse) protein is Collagen alpha-2(I) chain (Col1a2).